We begin with the raw amino-acid sequence, 639 residues long: tRNA 5-methylaminomethyl-2-thiouridine biosynthesis bifunctional protein MnmC (639 aa).

The segment at 1 to 228 (MSEPIEWLED…KRDNLQATYA (228 aa)) is tRNA (mnm(5)s(2)U34)-methyltransferase. The tract at residues 254 to 639 (VGAGLAGAAV…SERWLGYEPQ (386 aa)) is FAD-dependent cmnm(5)s(2)U34 oxidoreductase.

This sequence in the N-terminal section; belongs to the methyltransferase superfamily. tRNA (mnm(5)s(2)U34)-methyltransferase family. The protein in the C-terminal section; belongs to the DAO family. Requires FAD as cofactor.

It localises to the cytoplasm. It catalyses the reaction 5-aminomethyl-2-thiouridine(34) in tRNA + S-adenosyl-L-methionine = 5-methylaminomethyl-2-thiouridine(34) in tRNA + S-adenosyl-L-homocysteine + H(+). Its function is as follows. Catalyzes the last two steps in the biosynthesis of 5-methylaminomethyl-2-thiouridine (mnm(5)s(2)U) at the wobble position (U34) in tRNA. Catalyzes the FAD-dependent demodification of cmnm(5)s(2)U34 to nm(5)s(2)U34, followed by the transfer of a methyl group from S-adenosyl-L-methionine to nm(5)s(2)U34, to form mnm(5)s(2)U34. This is tRNA 5-methylaminomethyl-2-thiouridine biosynthesis bifunctional protein MnmC from Acidovorax sp. (strain JS42).